Reading from the N-terminus, the 194-residue chain is 7-methyl-GTP pyrophosphatase (194 aa).

Aspartate 70 serves as the catalytic Proton acceptor.

It belongs to the Maf family. YceF subfamily. It depends on a divalent metal cation as a cofactor.

Its subcellular location is the cytoplasm. The enzyme catalyses N(7)-methyl-GTP + H2O = N(7)-methyl-GMP + diphosphate + H(+). Nucleoside triphosphate pyrophosphatase that hydrolyzes 7-methyl-GTP (m(7)GTP). May have a dual role in cell division arrest and in preventing the incorporation of modified nucleotides into cellular nucleic acids. This chain is 7-methyl-GTP pyrophosphatase, found in Vibrio vulnificus (strain CMCP6).